The following is a 155-amino-acid chain: Large ribosomal subunit protein uL22 (155 aa).

Belongs to the universal ribosomal protein uL22 family. As to quaternary structure, part of the 50S ribosomal subunit.

In terms of biological role, this protein binds specifically to 23S rRNA. It makes multiple contacts with different domains of the 23S rRNA in the assembled 50S subunit and ribosome. The globular domain of the protein is located near the polypeptide exit tunnel on the outside of the subunit, while an extended beta-hairpin is found that lines the wall of the exit tunnel in the center of the 70S ribosome. The protein is Large ribosomal subunit protein uL22 of Pyrococcus abyssi (strain GE5 / Orsay).